The chain runs to 163 residues: Leptin (163 aa).

An N-terminal signal peptide occupies residues 1–18 (MCWRPLCRLWSYLVYVQA). Cys-113 and Cys-163 are joined by a disulfide.

The protein belongs to the leptin family. In terms of tissue distribution, not exclusively localized in adipose tissue but is also expressed in liver.

It is found in the secreted. Key player in the regulation of energy balance and body weight control. Once released into the circulation, has central and peripheral effects by binding LEPR, found in many tissues, which results in the activation of several major signaling pathways. This chain is Leptin (LEP), found in Gallus gallus (Chicken).